Here is a 509-residue protein sequence, read N- to C-terminus: Protein disulfide-isomerase (509 aa).

The signal sequence occupies residues 1 to 19 (MLSRSLLCLALAWVARVGA). In terms of domain architecture, Thioredoxin 1 spans 20–136 (DAPEEEDNVL…IVNWLKKRTG (117 aa)). Catalysis depends on nucleophile residues C55 and C58. Cysteines 55 and 58 form a disulfide. K202 is modified (N6-acetyllysine). N6-succinyllysine is present on residues K224 and K273. 2 positions are modified to phosphoserine: S333 and S359. A Thioredoxin 2 domain is found at 335–477 (ELTAEKITEF…FKKFLESGGQ (143 aa)). Residues C399 and C402 each act as nucleophile in the active site. The cysteines at positions 399 and 402 are disulfide-linked. S429 is modified (phosphoserine). The disordered stretch occupies residues 473 to 509 (ESGGQDGAGDDDDVDLEEALEPDMEEDDDQKAVKDEL). A compositionally biased stretch (acidic residues) spans 480–501 (AGDDDDVDLEEALEPDMEEDDD). Residues 506–509 (KDEL) carry the Prevents secretion from ER motif.

Belongs to the protein disulfide isomerase family. Heterodimer; heterodimerizes with the protein microsomal triglyceride transfer MTTP. Homodimer. Homodimer. Monomers and homotetramers may also occur. Interacts with P4HA2, forming a heterotetramer consisting of 2 alpha subunits (P4HA2) and 2 beta (P4HB), where P4HB plays the role of a structural subunit; this tetramer catalyzes the formation of 4-hydroxyproline in collagen. Also constitutes the structural subunit of the microsomal triacylglycerol transfer protein MTTP in mammalian cells. Stabilizes both enzymes and retain them in the ER without contributing to the catalytic activity. Binds UBQLN1. Interacts with ERO1B. Interacts with ILDR2. Interacts with ERN1/IRE1A (via N-terminus); the interaction is enhanced by phosphorylation of P4HB by FAM20C in response to endoplasmic reticulum stress and results in attenuation of ERN1 activity. In terms of processing, phosphorylation of Ser-359 by FAM20C is induced by endoplasmic reticulum stress and results in a functional switch from oxidoreductase to molecular chaperone. It also promotes interaction with ERN1.

Its subcellular location is the endoplasmic reticulum. It is found in the endoplasmic reticulum lumen. It localises to the melanosome. The protein resides in the cell membrane. It carries out the reaction Catalyzes the rearrangement of -S-S- bonds in proteins.. Its function is as follows. This multifunctional protein catalyzes the formation, breakage and rearrangement of disulfide bonds. At the cell surface, seems to act as a reductase that cleaves disulfide bonds of proteins attached to the cell. May therefore cause structural modifications of exofacial proteins. Inside the cell, seems to form/rearrange disulfide bonds of nascent proteins. At high concentrations and following phosphorylation by FAM20C, functions as a chaperone that inhibits aggregation of misfolded proteins. At low concentrations, facilitates aggregation (anti-chaperone activity). May be involved with other chaperones in the structural modification of the TG precursor in hormone biogenesis. Also acts as a structural subunit of various enzymes such as prolyl 4-hydroxylase and microsomal triacylglycerol transfer protein MTTP. Receptor for LGALS9; the interaction retains P4HB at the cell surface of Th2 T helper cells, increasing disulfide reductase activity at the plasma membrane, altering the plasma membrane redox state and enhancing cell migration. This Cricetulus griseus (Chinese hamster) protein is Protein disulfide-isomerase (P4HB).